The primary structure comprises 277 residues: Urease accessory protein UreD (277 aa).

The disordered stretch occupies residues 1–20 (MRQTAQEDASPAPMQRAHGT).

It belongs to the UreD family. UreD, UreF and UreG form a complex that acts as a GTP-hydrolysis-dependent molecular chaperone, activating the urease apoprotein by helping to assemble the nickel containing metallocenter of UreC. The UreE protein probably delivers the nickel.

The protein localises to the cytoplasm. Functionally, required for maturation of urease via the functional incorporation of the urease nickel metallocenter. The polypeptide is Urease accessory protein UreD (Chelativorans sp. (strain BNC1)).